The following is a 199-amino-acid chain: Superoxide dismutase [Mn/Fe] (199 aa).

4 residues coordinate Fe(3+): His-27, His-81, Asp-161, and His-165. Residues His-27, His-81, Asp-161, and His-165 each contribute to the Mn(2+) site.

Belongs to the iron/manganese superoxide dismutase family. In terms of assembly, homodimer. Requires Mn(2+) as cofactor. It depends on Fe(3+) as a cofactor.

The enzyme catalyses 2 superoxide + 2 H(+) = H2O2 + O2. Functionally, destroys superoxide anion radicals which are normally produced within the cells and which are toxic to biological systems. Catalyzes the dismutation of superoxide anion radicals into O2 and H2O2 by successive reduction and oxidation of the transition metal ion at the active site. Also contributes to the inhibition of lipid oxidation. Manganese-preferring enzyme, less active with iron than with manganese. The sequence is that of Superoxide dismutase [Mn/Fe] (sodA) from Staphylococcus xylosus.